The primary structure comprises 329 residues: Helicase VP6-A (329 aa).

Disordered regions lie at residues 27-130 and 189-232; these read INLV…TNGG and DLRR…SEEP. Composition is skewed to basic and acidic residues over residues 36–58, 65–83, and 96–109; these read EGGKEDKTEPKEESKAEGSKDGE, GQKEEGGKETKDADVDRRI, and SGERANENANRGDG. Lys-110 contacts ATP. The segment covering 110 to 129 has biased composition (gly residues); it reads KVGGGGGDADAGVGATGTNG. Composition is skewed to basic and acidic residues over residues 189–207 and 215–232; these read DLRRKEKNGTHAKAVERGG and HGDAQREGVEEEKTSEEP.

The protein belongs to the reoviruses VP6 family. As to quaternary structure, homohexamer.

The protein localises to the virion. The enzyme catalyses ATP + H2O = ADP + phosphate + H(+). ATP dependent RNA helicase essential for RNA packaging and viral transcription. Possesses ss- and dsRNA-binding capacity. This chain is Helicase VP6-A (Segment-9), found in Antilocapra americana (Pronghorn).